A 207-amino-acid polypeptide reads, in one-letter code: Arginine exporter protein ArgO (207 aa).

Helical transmembrane passes span 1–21 (MLST…PLGP), 42–62 (LCAI…SALL), 67–87 (LLLQ…GWGA), 111–131 (VVAI…DTIV), 150–170 (FGAA…AAWF), and 185–205 (GFIC…GLLI).

This sequence belongs to the LysE/ArgO transporter (TC 2.A.75) family.

It is found in the cell inner membrane. It catalyses the reaction L-arginine(in) = L-arginine(out). Involved in the export of arginine. Important to control the intracellular level of arginine and the correct balance between arginine and lysine. The protein is Arginine exporter protein ArgO of Photorhabdus laumondii subsp. laumondii (strain DSM 15139 / CIP 105565 / TT01) (Photorhabdus luminescens subsp. laumondii).